Reading from the N-terminus, the 819-residue chain is MDVTIDFSREEWQHLDPAQRSLYRDVVQETYSHLRSVEELQQIGDQKKTYQQIGHKSASDMVFITKTLGAESCHDYSGVRKVIHVNSYIVLPPKRPRHWDPPEDEPKHSSDLQTHDESNGLKRTKRITEYGKISSCINTEHILTGEKLPDHNQCGKVLGYKQIPCQYQKIHTGEKSYECAEFGKIFTQKSQLRVHVTSPTGEKLYVCVECGKACSQTSEFLTHQKTHTREKPYKCGDCGKSFFQVSSLFRHRRIHTGEKLYDCSHCGKGFSYNSDLRIHQKIHTGEKRHGCVDCGKAFTQKSTLRMHQKIHTGERAYVCIECGQAFIQKTHLVAHRRIHTGEKPYACDGCGKAFLSKSQLLVHQRIHSRVRPCVSLDRAKPFSSAPNLLPRKKVQMREKSSICAECGKAFTYRSELIIHQRTHTGEKPYQCGDCGKAFTQKSALTVHRRIHTGEKSYVCVKCGLAFVQRAHLDAHQVIHTGEKPYQCGHCGKFFTSKSQLHVHKRIHTGEKPYVCSNCGKAFANRSNLITHQKTHTGEKAYVCARCGKAFTQRSDLVTHQRIHTGEKPYGCSTCGKAFTQKSHLSIHEKIHTGERQYGCRDCGKAFNQKSILIVHQKIHTGEKPHVCAECGRAFIRKSNFITHQRIHTGEKPYGCTDCGKSFTSKSQLLVHRPIHTGEKPYVCAECGKAFSGRSNLSKHQKTHTGEKPYACSECGKSFRQKSELITHHRIHTGEKPYDCGDCGKSFTKKSQLQVHQRIHTGEKPYRCAECGKAFTDRSNLNKHQTTHTGEKPYKCVVCGKGFVQKSVLSIHENVHTSAV.

The region spanning 1-75 (MDVTIDFSRE…KTLGAESCHD (75 aa)) is the KRAB domain. The interval 93–123 (PKRPRHWDPPEDEPKHSSDLQTHDESNGLKR) is disordered. Residues 98–120 (HWDPPEDEPKHSSDLQTHDESNG) show a composition bias toward basic and acidic residues. 21 C2H2-type zinc fingers span residues 205 to 227 (YVCV…QKTH), 233 to 255 (YKCG…RRIH), 261 to 283 (YDCS…QKIH), 289 to 311 (HGCV…QKIH), 317 to 339 (YVCI…RRIH), 345 to 367 (YACD…QRIH), 401 to 423 (SICA…QRTH), 429 to 451 (YQCG…RRIH), 457 to 479 (YVCV…QVIH), 485 to 507 (YQCG…KRIH), 513 to 535 (YVCS…QKTH), 541 to 563 (YVCA…QRIH), 569 to 591 (YGCS…EKIH), 597 to 619 (YGCR…QKIH), 625 to 647 (HVCA…QRIH), 653 to 675 (YGCT…RPIH), 681 to 703 (YVCA…QKTH), 709 to 731 (YACS…HRIH), 737 to 759 (YDCG…QRIH), 765 to 787 (YRCA…QTTH), and 793 to 815 (YKCV…ENVH).

The protein belongs to the krueppel C2H2-type zinc-finger protein family.

The protein localises to the nucleus. Its function is as follows. May be involved in transcriptional regulation. The sequence is that of Zinc finger protein 27 (Zfp27) from Mus musculus (Mouse).